We begin with the raw amino-acid sequence, 264 residues long: S-adenosylmethionine decarboxylase proenzyme (264 aa).

Ser-112 serves as the catalytic Schiff-base intermediate with substrate; via pyruvic acid. Ser-112 carries the pyruvic acid (Ser); by autocatalysis modification. Residue His-117 is the Proton acceptor; for processing activity of the active site. Cys-140 (proton donor; for catalytic activity) is an active-site residue.

It belongs to the prokaryotic AdoMetDC family. Type 2 subfamily. As to quaternary structure, heterooctamer of four alpha and four beta chains arranged as a tetramer of alpha/beta heterodimers. Pyruvate serves as cofactor. Post-translationally, is synthesized initially as an inactive proenzyme. Formation of the active enzyme involves a self-maturation process in which the active site pyruvoyl group is generated from an internal serine residue via an autocatalytic post-translational modification. Two non-identical subunits are generated from the proenzyme in this reaction, and the pyruvate is formed at the N-terminus of the alpha chain, which is derived from the carboxyl end of the proenzyme. The post-translation cleavage follows an unusual pathway, termed non-hydrolytic serinolysis, in which the side chain hydroxyl group of the serine supplies its oxygen atom to form the C-terminus of the beta chain, while the remainder of the serine residue undergoes an oxidative deamination to produce ammonia and the pyruvoyl group blocking the N-terminus of the alpha chain.

The enzyme catalyses S-adenosyl-L-methionine + H(+) = S-adenosyl 3-(methylsulfanyl)propylamine + CO2. It participates in amine and polyamine biosynthesis; S-adenosylmethioninamine biosynthesis; S-adenosylmethioninamine from S-adenosyl-L-methionine: step 1/1. Its function is as follows. Catalyzes the decarboxylation of S-adenosylmethionine to S-adenosylmethioninamine (dcAdoMet), the propylamine donor required for the synthesis of the polyamines spermine and spermidine from the diamine putrescine. This Yersinia pseudotuberculosis serotype O:1b (strain IP 31758) protein is S-adenosylmethionine decarboxylase proenzyme.